The chain runs to 154 residues: 6,7-dimethyl-8-ribityllumazine synthase (154 aa).

5-amino-6-(D-ribitylamino)uracil is bound by residues Phe-22, Ala-56–Glu-58, and Ala-80–Ile-82. Ala-85–Thr-86 is a (2S)-2-hydroxy-3-oxobutyl phosphate binding site. His-88 serves as the catalytic Proton donor. Phe-113 lines the 5-amino-6-(D-ribitylamino)uracil pocket. Arg-127 lines the (2S)-2-hydroxy-3-oxobutyl phosphate pocket.

Belongs to the DMRL synthase family. In terms of assembly, forms an icosahedral capsid composed of 60 subunits, arranged as a dodecamer of pentamers.

It catalyses the reaction (2S)-2-hydroxy-3-oxobutyl phosphate + 5-amino-6-(D-ribitylamino)uracil = 6,7-dimethyl-8-(1-D-ribityl)lumazine + phosphate + 2 H2O + H(+). The protein operates within cofactor biosynthesis; riboflavin biosynthesis; riboflavin from 2-hydroxy-3-oxobutyl phosphate and 5-amino-6-(D-ribitylamino)uracil: step 1/2. In terms of biological role, catalyzes the formation of 6,7-dimethyl-8-ribityllumazine by condensation of 5-amino-6-(D-ribitylamino)uracil with 3,4-dihydroxy-2-butanone 4-phosphate. This is the penultimate step in the biosynthesis of riboflavin. The protein is 6,7-dimethyl-8-ribityllumazine synthase of Anoxybacillus flavithermus (strain DSM 21510 / WK1).